The primary structure comprises 20 residues: Maximin-Hu (20 aa).

The protein belongs to the bombinin family. In terms of tissue distribution, expressed by the skin glands.

Its subcellular location is the secreted. In terms of biological role, has antimicrobial activity. This chain is Maximin-Hu, found in Bombina maxima (Giant fire-bellied toad).